A 401-amino-acid polypeptide reads, in one-letter code: Glycerol-3-phosphate dehydrogenase [NAD(+)] 1 (401 aa).

Residues 40–45, Phe128, Lys151, and Ala184 contribute to the NAD(+) site; that span reads GSGNWG. Lys151 lines the substrate pocket. The active-site Proton acceptor is Lys244. NAD(+) contacts are provided by Arg309 and Gln338. Residue 309–310 coordinates substrate; it reads RN.

Belongs to the NAD-dependent glycerol-3-phosphate dehydrogenase family.

The protein localises to the cytoplasm. The catalysed reaction is sn-glycerol 3-phosphate + NAD(+) = dihydroxyacetone phosphate + NADH + H(+). This chain is Glycerol-3-phosphate dehydrogenase [NAD(+)] 1 (GPD1), found in Zygosaccharomyces rouxii.